A 155-amino-acid chain; its full sequence is Egg-lysin (155 aa).

The signal sequence occupies residues 1–18 (MKLLVLCLFAMMATLAVS).

As to quaternary structure, monomer. Homodimer. Molecules associate into dimers and then rapidly dissociate again. Interacts (as a monomer) with the egg vitelline layer protein VERL (via VERL repeats); each VERL chain can bind multiple copies of lysin. Sperm (at protein level).

The protein localises to the cytoplasmic vesicle. Its subcellular location is the secretory vesicle. The protein resides in the acrosome lumen. Functionally, creates a 3 um hole in the egg vitelline layer through which the sperm passes. Does not have enzyme activity. Species-specific interaction between the sperm protein lysin and the egg protein VERL exposes a basic surface on lysin that may dissociate the egg vitelline layer via electrostatic repulsion. Plays a role in ensuring species-specific fertilization. This chain is Egg-lysin, found in Haliotis corrugata (Pink abalone).